A 147-amino-acid chain; its full sequence is Large ribosomal subunit protein uL16 (147 aa).

This sequence belongs to the universal ribosomal protein uL16 family. Part of the 50S ribosomal subunit.

Functionally, binds 23S rRNA and is also seen to make contacts with the A and possibly P site tRNAs. This chain is Large ribosomal subunit protein uL16, found in Clostridium botulinum (strain ATCC 19397 / Type A).